The following is a 158-amino-acid chain: uncharacterized protein (158 aa).

A signal peptide spans 1–16 (MFRPILILTILSCVLA). N-linked (GlcNAc...) asparagine glycosylation is present at Asn122.

This is an uncharacterized protein from Caenorhabditis elegans.